The chain runs to 256 residues: Proteasome subunit alpha (256 aa).

The interval leucine 226–serine 256 is disordered. Over residues glycine 245–serine 256 the composition is skewed to basic and acidic residues.

It belongs to the peptidase T1A family. In terms of assembly, the 20S proteasome core is composed of 14 alpha and 14 beta subunits that assemble into four stacked heptameric rings, resulting in a barrel-shaped structure. The two inner rings, each composed of seven catalytic beta subunits, are sandwiched by two outer rings, each composed of seven alpha subunits. The catalytic chamber with the active sites is on the inside of the barrel. Has a gated structure, the ends of the cylinder being occluded by the N-termini of the alpha-subunits. Is capped by the proteasome-associated ATPase, ARC.

The protein localises to the cytoplasm. It functions in the pathway protein degradation; proteasomal Pup-dependent pathway. With respect to regulation, the formation of the proteasomal ATPase ARC-20S proteasome complex, likely via the docking of the C-termini of ARC into the intersubunit pockets in the alpha-rings, may trigger opening of the gate for substrate entry. Interconversion between the open-gate and close-gate conformations leads to a dynamic regulation of the 20S proteasome proteolysis activity. Functionally, component of the proteasome core, a large protease complex with broad specificity involved in protein degradation. The protein is Proteasome subunit alpha of Saccharopolyspora erythraea (strain ATCC 11635 / DSM 40517 / JCM 4748 / NBRC 13426 / NCIMB 8594 / NRRL 2338).